Reading from the N-terminus, the 71-residue chain is Large ribosomal subunit protein bL31 (71 aa).

Zn(2+) is bound by residues Cys16, Cys18, Cys37, and Cys40.

It belongs to the bacterial ribosomal protein bL31 family. Type A subfamily. Part of the 50S ribosomal subunit. Zn(2+) is required as a cofactor.

Functionally, binds the 23S rRNA. In Aeromonas salmonicida (strain A449), this protein is Large ribosomal subunit protein bL31.